We begin with the raw amino-acid sequence, 428 residues long: Phosphomethylpyrimidine synthase 2 (428 aa).

Residues methionine 94, tyrosine 123, histidine 162, 184–186, 225–228, and glutamate 264 each bind substrate; these read SRG and NGMR. Histidine 268 is a Zn(2+) binding site. Residue tyrosine 291 participates in substrate binding. Histidine 332 lines the Zn(2+) pocket. The [4Fe-4S] cluster site is built by cysteine 408, cysteine 411, and cysteine 415.

It belongs to the ThiC family. It depends on [4Fe-4S] cluster as a cofactor.

It carries out the reaction 5-amino-1-(5-phospho-beta-D-ribosyl)imidazole + S-adenosyl-L-methionine = 4-amino-2-methyl-5-(phosphooxymethyl)pyrimidine + CO + 5'-deoxyadenosine + formate + L-methionine + 3 H(+). Its pathway is cofactor biosynthesis; thiamine diphosphate biosynthesis. Catalyzes the synthesis of the hydroxymethylpyrimidine phosphate (HMP-P) moiety of thiamine from aminoimidazole ribotide (AIR) in a radical S-adenosyl-L-methionine (SAM)-dependent reaction. The sequence is that of Phosphomethylpyrimidine synthase 2 from Methanosarcina mazei (strain ATCC BAA-159 / DSM 3647 / Goe1 / Go1 / JCM 11833 / OCM 88) (Methanosarcina frisia).